The following is a 113-amino-acid chain: Colipase (113 aa).

Residues 1 to 18 (MEKVLVLLLVSLLAVAYA) form the signal peptide. Positions 19–23 (APGPR) are cleaved as a propeptide — enterostatin, activation peptide. 5 disulfide bridges follow: C35–C46, C41–C57, C45–C79, C67–C87, and C81–C105.

The protein belongs to the colipase family. Forms a 1:1 stoichiometric complex with pancreatic lipase. In terms of tissue distribution, expressed by the pancreas.

The protein localises to the secreted. In terms of biological role, colipase is a cofactor of pancreatic lipase. It allows the lipase to anchor itself to the lipid-water interface. Without colipase the enzyme is washed off by bile salts, which have an inhibitory effect on the lipase. Its function is as follows. Enterostatin has a biological activity as a satiety signal. The sequence is that of Colipase from Mus musculus (Mouse).